A 474-amino-acid polypeptide reads, in one-letter code: ATP synthase subunit beta (474 aa).

153 to 160 (GGAGVGKT) contributes to the ATP binding site.

It belongs to the ATPase alpha/beta chains family. In terms of assembly, F-type ATPases have 2 components, CF(1) - the catalytic core - and CF(0) - the membrane proton channel. CF(1) has five subunits: alpha(3), beta(3), gamma(1), delta(1), epsilon(1). CF(0) has three main subunits: a(1), b(2) and c(9-12). The alpha and beta chains form an alternating ring which encloses part of the gamma chain. CF(1) is attached to CF(0) by a central stalk formed by the gamma and epsilon chains, while a peripheral stalk is formed by the delta and b chains.

It localises to the cell inner membrane. It carries out the reaction ATP + H2O + 4 H(+)(in) = ADP + phosphate + 5 H(+)(out). Functionally, produces ATP from ADP in the presence of a proton gradient across the membrane. The catalytic sites are hosted primarily by the beta subunits. In Neorickettsia sennetsu (strain ATCC VR-367 / Miyayama) (Ehrlichia sennetsu), this protein is ATP synthase subunit beta.